The following is a 148-amino-acid chain: Small ribosomal subunit protein uS12 (148 aa).

It belongs to the universal ribosomal protein uS12 family. In terms of assembly, part of the 30S ribosomal subunit.

With S4 and S5 plays an important role in translational accuracy. Located at the interface of the 30S and 50S subunits. In Methanocaldococcus jannaschii (strain ATCC 43067 / DSM 2661 / JAL-1 / JCM 10045 / NBRC 100440) (Methanococcus jannaschii), this protein is Small ribosomal subunit protein uS12.